The primary structure comprises 229 residues: Uracil-DNA glycosylase (229 aa).

Asp-70 serves as the catalytic Proton acceptor.

Belongs to the uracil-DNA glycosylase (UDG) superfamily. UNG family.

The protein localises to the cytoplasm. It carries out the reaction Hydrolyzes single-stranded DNA or mismatched double-stranded DNA and polynucleotides, releasing free uracil.. Excises uracil residues from the DNA which can arise as a result of misincorporation of dUMP residues by DNA polymerase or due to deamination of cytosine. The chain is Uracil-DNA glycosylase from Chlamydia felis (strain Fe/C-56) (Chlamydophila felis).